A 254-amino-acid chain; its full sequence is Homeobox protein Dlx4b (254 aa).

The homeobox DNA-binding region spans isoleucine 129–methionine 188.

The protein belongs to the distal-less homeobox family.

It localises to the nucleus. Functionally, during larvae development, may be important for neurocranium morphogenesis. The chain is Homeobox protein Dlx4b (dlx4b) from Danio rerio (Zebrafish).